Consider the following 455-residue polypeptide: UDP-glycosyltransferase 87A2 (455 aa).

An N-acetylmethionine modification is found at M1. Residues S278, 327 to 329 (CDQ), 344 to 352 (HCGFNSTLE), and 366 to 369 (FWDQ) each bind UDP-alpha-D-glucose.

This sequence belongs to the UDP-glycosyltransferase family.

This is UDP-glycosyltransferase 87A2 (UGT87A2) from Arabidopsis thaliana (Mouse-ear cress).